We begin with the raw amino-acid sequence, 195 residues long: MKVTKSEIVISAVKPEQYPDGGLPEIALAGRSNVGKSSFINSLINRKNLARTSSKPGKTQTLNFYIINDELHFVDVPGYGFAKVSKSEREAWGRMIETYMTTREELKACVQIVDLRHAPSAEDVNMYEFLKYYGIPVIVIATKADKIPKGKWDKHLKVVKQTLDMDPEDELILFSSETKKGKDEAWGAIKKMISR.

The EngB-type G domain maps to 22–195 (GLPEIALAGR…WGAIKKMISR (174 aa)). GTP is bound by residues 30–37 (GRSNVGKS), 57–61 (GKTQT), 75–78 (DVPG), 142–145 (TKAD), and 174–176 (FSS). Mg(2+)-binding residues include Ser-37 and Thr-59.

It belongs to the TRAFAC class TrmE-Era-EngA-EngB-Septin-like GTPase superfamily. EngB GTPase family. Requires Mg(2+) as cofactor.

Functionally, necessary for normal cell division and for the maintenance of normal septation. The sequence is that of Probable GTP-binding protein EngB from Bacillus velezensis (strain DSM 23117 / BGSC 10A6 / LMG 26770 / FZB42) (Bacillus amyloliquefaciens subsp. plantarum).